Here is a 489-residue protein sequence, read N- to C-terminus: Probable transporter MCH1 (489 aa).

The next 12 membrane-spanning stretches (helical) occupy residues 34-54 (ISLISCLCAGSVLLFALFTPV), 68-88 (IIGSFTSIGMYLPLPVLGYLA), 94-114 (VLLSVISVLFFSPGYTLAATV), 124-144 (LAISFGLIGCATSALYFTALL), 156-175 (LTISAPVTCYGLSSLIGSRV), 196-216 (FSFLYFFLGLFDWVSASVVSI), 262-282 (ISTYVLLFSLLLSIGPSEMYI), 302-324 (VAIHAVFSTLSRLSLGALSDFLV), 335-355 (LLSIIVLGFFTQIFIATSTFV), 359-379 (YYIISALSGFSYGGLFTLYPT), 403-423 (IGSTTFGMVFGLVYDSACGVF), and 463-483 (SLIIINHLHYIKYIYLLILRI).

It belongs to the major facilitator superfamily.

It localises to the vacuole membrane. Its function is as follows. Probable transporter. This chain is Probable transporter MCH1 (MCH1), found in Wickerhamomyces anomalus (Yeast).